The sequence spans 303 residues: Glycine--tRNA ligase alpha subunit (303 aa).

This sequence belongs to the class-II aminoacyl-tRNA synthetase family. In terms of assembly, tetramer of two alpha and two beta subunits.

Its subcellular location is the cytoplasm. The catalysed reaction is tRNA(Gly) + glycine + ATP = glycyl-tRNA(Gly) + AMP + diphosphate. The chain is Glycine--tRNA ligase alpha subunit from Streptococcus equi subsp. zooepidemicus (strain H70).